Here is a 379-residue protein sequence, read N- to C-terminus: Cytochrome b (379 aa).

A run of 4 helical transmembrane segments spans residues 33-53 (FGSL…FLAM), 77-98 (WLIR…FIHV), 113-133 (WNIG…GYVL), and 178-198 (FFAF…VHLL). Positions 83 and 97 each coordinate heme b. Residues histidine 182 and histidine 196 each coordinate heme b. Residue histidine 201 participates in a ubiquinone binding. The next 4 membrane-spanning stretches (helical) occupy residues 226-246 (IKDL…ALFF), 288-308 (LGGV…PLLN), 320-340 (VTQT…WIGG), and 347-367 (FTTI…ILIP).

Belongs to the cytochrome b family. As to quaternary structure, the cytochrome bc1 complex contains 11 subunits: 3 respiratory subunits (MT-CYB, CYC1 and UQCRFS1), 2 core proteins (UQCRC1 and UQCRC2) and 6 low-molecular weight proteins (UQCRH/QCR6, UQCRB/QCR7, UQCRQ/QCR8, UQCR10/QCR9, UQCR11/QCR10 and a cleavage product of UQCRFS1). This cytochrome bc1 complex then forms a dimer. Heme b serves as cofactor.

It localises to the mitochondrion inner membrane. In terms of biological role, component of the ubiquinol-cytochrome c reductase complex (complex III or cytochrome b-c1 complex) that is part of the mitochondrial respiratory chain. The b-c1 complex mediates electron transfer from ubiquinol to cytochrome c. Contributes to the generation of a proton gradient across the mitochondrial membrane that is then used for ATP synthesis. This Akodon lindberghi (Lindbergh's grass mouse) protein is Cytochrome b (MT-CYB).